We begin with the raw amino-acid sequence, 366 residues long: Alanine racemase (366 aa).

The Proton acceptor; specific for D-alanine role is filled by lysine 40. Lysine 40 is subject to N6-(pyridoxal phosphate)lysine. Substrate is bound at residue arginine 136. Tyrosine 263 acts as the Proton acceptor; specific for L-alanine in catalysis. Methionine 310 contributes to the substrate binding site.

This sequence belongs to the alanine racemase family. Pyridoxal 5'-phosphate is required as a cofactor.

It catalyses the reaction L-alanine = D-alanine. The protein operates within amino-acid biosynthesis; D-alanine biosynthesis; D-alanine from L-alanine: step 1/1. Its function is as follows. Catalyzes the interconversion of L-alanine and D-alanine. May also act on other amino acids. This is Alanine racemase (alr) from Streptococcus equi subsp. equi (strain 4047).